We begin with the raw amino-acid sequence, 140 residues long: Nucleoside diphosphate kinase (140 aa).

Positions 9, 57, 85, 91, 102, and 112 each coordinate ATP. His-115 functions as the Pros-phosphohistidine intermediate in the catalytic mechanism.

Belongs to the NDK family. Homotetramer. The cofactor is Mg(2+).

It localises to the cytoplasm. The catalysed reaction is a 2'-deoxyribonucleoside 5'-diphosphate + ATP = a 2'-deoxyribonucleoside 5'-triphosphate + ADP. It catalyses the reaction a ribonucleoside 5'-diphosphate + ATP = a ribonucleoside 5'-triphosphate + ADP. Its function is as follows. Major role in the synthesis of nucleoside triphosphates other than ATP. The ATP gamma phosphate is transferred to the NDP beta phosphate via a ping-pong mechanism, using a phosphorylated active-site intermediate. The chain is Nucleoside diphosphate kinase from Chlorobium chlorochromatii (strain CaD3).